The sequence spans 253 residues: Imidazole glycerol phosphate synthase subunit HisF (253 aa).

Catalysis depends on residues D11 and D130.

Belongs to the HisA/HisF family. Heterodimer of HisH and HisF.

Its subcellular location is the cytoplasm. It catalyses the reaction 5-[(5-phospho-1-deoxy-D-ribulos-1-ylimino)methylamino]-1-(5-phospho-beta-D-ribosyl)imidazole-4-carboxamide + L-glutamine = D-erythro-1-(imidazol-4-yl)glycerol 3-phosphate + 5-amino-1-(5-phospho-beta-D-ribosyl)imidazole-4-carboxamide + L-glutamate + H(+). The protein operates within amino-acid biosynthesis; L-histidine biosynthesis; L-histidine from 5-phospho-alpha-D-ribose 1-diphosphate: step 5/9. In terms of biological role, IGPS catalyzes the conversion of PRFAR and glutamine to IGP, AICAR and glutamate. The HisF subunit catalyzes the cyclization activity that produces IGP and AICAR from PRFAR using the ammonia provided by the HisH subunit. This chain is Imidazole glycerol phosphate synthase subunit HisF, found in Acidithiobacillus ferrooxidans (strain ATCC 23270 / DSM 14882 / CIP 104768 / NCIMB 8455) (Ferrobacillus ferrooxidans (strain ATCC 23270)).